Reading from the N-terminus, the 294-residue chain is Glycine--tRNA ligase alpha subunit (294 aa).

Belongs to the class-II aminoacyl-tRNA synthetase family. In terms of assembly, tetramer of two alpha and two beta subunits.

The protein localises to the cytoplasm. The catalysed reaction is tRNA(Gly) + glycine + ATP = glycyl-tRNA(Gly) + AMP + diphosphate. In Oleidesulfovibrio alaskensis (strain ATCC BAA-1058 / DSM 17464 / G20) (Desulfovibrio alaskensis), this protein is Glycine--tRNA ligase alpha subunit.